We begin with the raw amino-acid sequence, 173 residues long: 3-hydroxydecanoyl-[acyl-carrier-protein] dehydratase (173 aa).

The active site involves His-71.

Belongs to the thioester dehydratase family. FabA subfamily. In terms of assembly, homodimer.

The protein localises to the cytoplasm. The catalysed reaction is a (3R)-hydroxyacyl-[ACP] = a (2E)-enoyl-[ACP] + H2O. It carries out the reaction (3R)-hydroxydecanoyl-[ACP] = (2E)-decenoyl-[ACP] + H2O. It catalyses the reaction (2E)-decenoyl-[ACP] = (3Z)-decenoyl-[ACP]. It functions in the pathway lipid metabolism; fatty acid biosynthesis. Functionally, necessary for the introduction of cis unsaturation into fatty acids. Catalyzes the dehydration of (3R)-3-hydroxydecanoyl-ACP to E-(2)-decenoyl-ACP and then its isomerization to Z-(3)-decenoyl-ACP. Can catalyze the dehydratase reaction for beta-hydroxyacyl-ACPs with saturated chain lengths up to 16:0, being most active on intermediate chain length. This chain is 3-hydroxydecanoyl-[acyl-carrier-protein] dehydratase, found in Bradyrhizobium sp. (strain BTAi1 / ATCC BAA-1182).